The sequence spans 254 residues: Hydroxyacylglutathione hydrolase (254 aa).

Residues histidine 54, histidine 56, aspartate 58, histidine 59, histidine 111, aspartate 130, and histidine 168 each contribute to the Zn(2+) site.

It belongs to the metallo-beta-lactamase superfamily. Glyoxalase II family. As to quaternary structure, monomer. Zn(2+) serves as cofactor.

The enzyme catalyses an S-(2-hydroxyacyl)glutathione + H2O = a 2-hydroxy carboxylate + glutathione + H(+). It participates in secondary metabolite metabolism; methylglyoxal degradation; (R)-lactate from methylglyoxal: step 2/2. Functionally, thiolesterase that catalyzes the hydrolysis of S-D-lactoyl-glutathione to form glutathione and D-lactic acid. This is Hydroxyacylglutathione hydrolase from Legionella pneumophila (strain Lens).